We begin with the raw amino-acid sequence, 156 residues long: ATP synthase subunit b (156 aa).

Residues 11–31 (AIAFVLFVMFCMKFVWPPIMA) traverse the membrane as a helical segment.

The protein belongs to the ATPase B chain family. As to quaternary structure, F-type ATPases have 2 components, F(1) - the catalytic core - and F(0) - the membrane proton channel. F(1) has five subunits: alpha(3), beta(3), gamma(1), delta(1), epsilon(1). F(0) has three main subunits: a(1), b(2) and c(10-14). The alpha and beta chains form an alternating ring which encloses part of the gamma chain. F(1) is attached to F(0) by a central stalk formed by the gamma and epsilon chains, while a peripheral stalk is formed by the delta and b chains.

It is found in the cell inner membrane. In terms of biological role, f(1)F(0) ATP synthase produces ATP from ADP in the presence of a proton or sodium gradient. F-type ATPases consist of two structural domains, F(1) containing the extramembraneous catalytic core and F(0) containing the membrane proton channel, linked together by a central stalk and a peripheral stalk. During catalysis, ATP synthesis in the catalytic domain of F(1) is coupled via a rotary mechanism of the central stalk subunits to proton translocation. Component of the F(0) channel, it forms part of the peripheral stalk, linking F(1) to F(0). The protein is ATP synthase subunit b of Photorhabdus laumondii subsp. laumondii (strain DSM 15139 / CIP 105565 / TT01) (Photorhabdus luminescens subsp. laumondii).